We begin with the raw amino-acid sequence, 191 residues long: Inosine triphosphate pyrophosphatase (191 aa).

Residue 15-20 (TGNTNK) participates in ITP binding. Glu43 lines the Mg(2+) pocket. ITP-binding positions include Lys55, 71–72 (DT), Lys88, 147–150 (FGWD), Lys168, and 173–174 (HR).

The protein belongs to the HAM1 NTPase family. Homodimer. The cofactor is Mg(2+). Requires Mn(2+) as cofactor.

It is found in the cytoplasm. Its subcellular location is the nucleus. The catalysed reaction is ITP + H2O = IMP + diphosphate + H(+). The enzyme catalyses dITP + H2O = dIMP + diphosphate + H(+). It catalyses the reaction XTP + H2O = XMP + diphosphate + H(+). Functionally, pyrophosphatase that hydrolyzes non-canonical purine nucleotides such as inosine triphosphate (ITP), deoxyinosine triphosphate (dITP) or xanthosine 5'-triphosphate (XTP) to their respective monophosphate derivatives. The enzyme does not distinguish between the deoxy- and ribose forms. Probably excludes non-canonical purines from RNA and DNA precursor pools, thus preventing their incorporation into RNA and DNA and avoiding chromosomal lesions. The sequence is that of Inosine triphosphate pyrophosphatase from Chaetomium globosum (strain ATCC 6205 / CBS 148.51 / DSM 1962 / NBRC 6347 / NRRL 1970) (Soil fungus).